The primary structure comprises 308 residues: Elongation factor Ts (308 aa).

An involved in Mg(2+) ion dislocation from EF-Tu region spans residues 80-83; that stretch reads TDFV.

The protein belongs to the EF-Ts family.

The protein localises to the cytoplasm. Its function is as follows. Associates with the EF-Tu.GDP complex and induces the exchange of GDP to GTP. It remains bound to the aminoacyl-tRNA.EF-Tu.GTP complex up to the GTP hydrolysis stage on the ribosome. This is Elongation factor Ts from Rhodopseudomonas palustris (strain ATCC BAA-98 / CGA009).